The chain runs to 344 residues: uncharacterized protein (344 aa).

8 helical membrane passes run 25–45 (GAGWACGVTVVLPPPGTVGAV), 68–88 (FVDALLLAGGSAYGLAAADGV), 104–124 (GVVPIVPGAVIFDLPVGGWNC), 133–153 (SACAAAGVDVAVGTVGVGVGA), 161–181 (GVGTASATLQSGVTVGVLAVV), 224–244 (LGAFNTPFNTTIGVIACDAAL), 276–296 (VFALATGAVAVPPEAGVPAAL), and 302–322 (LVTAVGAAAADCLARAVLAGV).

This sequence belongs to the peptidase S58 family.

It is found in the cell membrane. In terms of biological role, aminopeptidase. This is an uncharacterized protein from Mycobacterium bovis (strain ATCC BAA-935 / AF2122/97).